The primary structure comprises 315 residues: tRNA pseudouridine synthase B (315 aa).

His42 contributes to the substrate binding site. Asp47 functions as the Nucleophile in the catalytic mechanism. Substrate contacts are provided by Tyr75, Tyr178, and Leu199.

Belongs to the pseudouridine synthase TruB family. Type 1 subfamily.

The enzyme catalyses uridine(55) in tRNA = pseudouridine(55) in tRNA. Its function is as follows. Responsible for synthesis of pseudouridine from uracil-55 in the psi GC loop of transfer RNAs. The protein is tRNA pseudouridine synthase B of Photorhabdus laumondii subsp. laumondii (strain DSM 15139 / CIP 105565 / TT01) (Photorhabdus luminescens subsp. laumondii).